A 122-amino-acid polypeptide reads, in one-letter code: MICOS complex subunit MIC13 homolog QIL1 (122 aa).

Residues 9 to 25 (GGLVAATVYYTQKVGIW) traverse the membrane as a helical segment.

Belongs to the MICOS complex subunit Mic13 family. Component of the mitochondrial contact site and cristae organizing system (MICOS) complex.

It localises to the mitochondrion inner membrane. Its function is as follows. Component of the MICOS complex, a large protein complex of the mitochondrial inner membrane that plays crucial roles in the maintenance of crista junctions, inner membrane architecture, and formation of contact sites to the outer membrane. The chain is MICOS complex subunit MIC13 homolog QIL1 from Drosophila melanogaster (Fruit fly).